The following is a 223-amino-acid chain: Small ribosomal subunit protein uS3 (223 aa).

Positions 39–108 (IRNFVKKNSY…NILINIVEVK (70 aa)) constitute a KH type-2 domain.

The protein belongs to the universal ribosomal protein uS3 family. In terms of assembly, part of the 30S ribosomal subunit. Forms a tight complex with proteins S10 and S14.

Binds the lower part of the 30S subunit head. Binds mRNA in the 70S ribosome, positioning it for translation. The protein is Small ribosomal subunit protein uS3 of Clostridium botulinum (strain Kyoto / Type A2).